The following is a 370-amino-acid chain: Ubiquitin carboxyl-terminal hydrolase 12 (370 aa).

The Required for plasma membrane localization of USP12/WDR20 motif lies at 1–4; that stretch reads MEIL. Positions 39 to 369 constitute a USP domain; that stretch reads FGLVNFGNTC…SGYILFYQSR (331 aa). Catalysis depends on Cys-48, which acts as the Nucleophile. Residues 146–157 are compositionally biased toward basic and acidic residues; the sequence is QEKQNGRLRNGD. The tract at residues 146-168 is disordered; the sequence is QEKQNGRLRNGDVDNEDNNSTPD. Residues Cys-186, Cys-189, Cys-233, and Cys-236 each coordinate Zn(2+). Catalysis depends on His-317, which acts as the Proton acceptor.

The protein belongs to the peptidase C19 family. USP12/USP46 subfamily. As to quaternary structure, interacts with WDR48. Interacts with WDR20; this interaction promotes translocation of the USP12 complex to the plasma membrane. Component of the USP12/WDR20/WDR48 deubiquitinating complex. Component of the USP12/DMWD/WDR48 deubiquitinating complex. Interacts with PHLPP1. Interacts with RBPJ. Interacts with CBP; this interaction blocks the acetyltransferase activity of CREBBP.

The protein resides in the nucleus. The protein localises to the cytoplasm. Its subcellular location is the cell membrane. The enzyme catalyses Thiol-dependent hydrolysis of ester, thioester, amide, peptide and isopeptide bonds formed by the C-terminal Gly of ubiquitin (a 76-residue protein attached to proteins as an intracellular targeting signal).. Its activity is regulated as follows. Activated by interaction with WDR20; WDR48 and DMWD through different allosteric mechanisms. Deubiquitinating enzyme that plays various roles in the regulation of the immune response and inflammation. During TCR engagement and activation, translocates into the cytoplasm and deubiquitinates its substrates LAT and TRAT1 and prevents their lysosome-dependent degradation to stabilize the TCR signaling complex at the plasma membrane. Plays an essential role in the selective LPS-induced macrophage response through the activation of NF-kappa-B pathway. In addition, promotes that antiviral immune response through targeting DNA sensor IFI16 to inhibit its proteasome-dependent degradation. Participates in the interferon signaling pathway and antiviral response independently of its deubiquitinase activity by maintaining nuclear phosphorylated STAT1 levels via inhibition of its CREBBP-mediated acetylation and subsequent dephosphorylation. Plays an intrinsic role in promoting the differentiation, activation and proliferation of CD4(+) T-cell by activating the NF-kappa-B signaling pathway through deubiquitinating and stabilizing B-cell lymphoma/leukemia 10/BCL10. In myeloid-derived suppressor cells promotes the activation of the NF-kappa-B via deubiquitination and stabilization of RELA. Regulates the 'Lys-63'-linked polyubiquitin chains of BAX and thereby modulates the mitochondrial apoptotic process. Negative regulator of NOTCH signaling that specifically deubiquitinates non-activated NOTCH receptors to target them for lysosomal degradation; deubiquitination of NOTCH stimulates its transport form late endosomes to lysosomes. Protects neurons against HTT/huntingtin-induced polyglutamine expansion-dependent neurodegeneration through regulation of autophagic flux. This function is independent of deubiquitinase activity or of other components of the USP12-WDR20-WDR48 deubiquitinating complex. In complex with WDR48, acts as a potential tumor suppressor by positively regulating PHLPP1 stability. In Mus musculus (Mouse), this protein is Ubiquitin carboxyl-terminal hydrolase 12 (Usp12).